A 201-amino-acid chain; its full sequence is MELVLKDASRALEVSETTFGRDFNEALVHQVVVAYAANARQGTRAQKTRAEITGTGKKPWRQKGTGRARAGGIKGPLWRGGGVTFAAKTQDHSQKVNKKMYRGALMSILSELVRQERLVVVEQFAVEAPKTKELKAKLKAMDLEDVLIVTAEVDENLFLAARNLYKVDVRDVAGLDPVSLIAFNKVLVTADAVKQIEEMLA.

The interval 46–71 is disordered; the sequence is QKTRAEITGTGKKPWRQKGTGRARAG.

This sequence belongs to the universal ribosomal protein uL4 family. Part of the 50S ribosomal subunit.

In terms of biological role, one of the primary rRNA binding proteins, this protein initially binds near the 5'-end of the 23S rRNA. It is important during the early stages of 50S assembly. It makes multiple contacts with different domains of the 23S rRNA in the assembled 50S subunit and ribosome. Forms part of the polypeptide exit tunnel. In Shewanella amazonensis (strain ATCC BAA-1098 / SB2B), this protein is Large ribosomal subunit protein uL4.